Consider the following 23-residue polypeptide: Brevinin-1Eb (23 aa).

Cys17 and Cys23 are disulfide-bonded.

It belongs to the frog skin active peptide (FSAP) family. Brevinin subfamily. As to expression, expressed by the skin glands.

It localises to the secreted. Functionally, shows antibacterial activity against representative Gram-negative and Gram-positive bacterial species, and a very high hemolytic activity. The sequence is that of Brevinin-1Eb from Pelophylax lessonae (Pool frog).